Consider the following 497-residue polypeptide: Serine hydroxymethyltransferase, mitochondrial (497 aa).

A mitochondrion-targeting transit peptide spans 1–27 (MFIRRLHTSSRRLTCGEALRACQQTGA). N6-(pyridoxal phosphate)lysine is present on lysine 272.

This sequence belongs to the SHMT family. Homotetramer. The cofactor is pyridoxal 5'-phosphate.

The protein localises to the mitochondrion. The enzyme catalyses (6R)-5,10-methylene-5,6,7,8-tetrahydrofolate + glycine + H2O = (6S)-5,6,7,8-tetrahydrofolate + L-serine. Its pathway is one-carbon metabolism; tetrahydrofolate interconversion. Interconversion of serine and glycine. The chain is Serine hydroxymethyltransferase, mitochondrial (SHM1) from Eremothecium gossypii (strain ATCC 10895 / CBS 109.51 / FGSC 9923 / NRRL Y-1056) (Yeast).